Here is a 387-residue protein sequence, read N- to C-terminus: uncharacterized protein (387 aa).

The signal sequence occupies residues 1–27 (MKKWMITIAMLILAGIALFVFISPLKS).

This is an uncharacterized protein from Bacillus subtilis (strain 168).